The chain runs to 620 residues: Guanylate cyclase soluble subunit beta-1 (620 aa).

H105 is a binding site for heme. The Guanylate cyclase domain occupies 421–554 (TILFSGIVGF…NTVNLTSRTE (134 aa)).

The protein belongs to the adenylyl cyclase class-4/guanylyl cyclase family. The active enzyme is formed by a heterodimer of an alpha and a beta subunit. Heterodimer with GUCY1A1. Can also form inactive homodimers in vitro. Heme is required as a cofactor.

Its subcellular location is the cytoplasm. It carries out the reaction GTP = 3',5'-cyclic GMP + diphosphate. Its activity is regulated as follows. Activated by nitric oxide in the presence of magnesium or manganese ions. Its function is as follows. Mediates responses to nitric oxide (NO) by catalyzing the biosynthesis of the signaling molecule cGMP. This is Guanylate cyclase soluble subunit beta-1 (Gucy1b1) from Mus musculus (Mouse).